A 293-amino-acid chain; its full sequence is Protein BOBBER 2 (293 aa).

Ala2 bears the N-acetylalanine mark. A coiled-coil region spans residues 50-80; that stretch reads EKEIVAAVMAAKQRLREAEKKKLEKESVKSM. 2 stretches are compositionally biased toward basic and acidic residues: residues 67–102 and 110–120; these read AEKKKLEKESVKSMEVEKPKKDSLKPTELEKPKEES and EIEKPKEEKES. The interval 67-125 is disordered; it reads AEKKKLEKESVKSMEVEKPKKDSLKPTELEKPKEESLMATDPMEIEKPKEEKESGPIVP. Residues 131–220 enclose the CS domain; sequence LDFEKYSWGQ…DQMEWWKYCV (90 aa).

It is found in the cytoplasm. Its subcellular location is the cytoplasmic granule. Small heat shock protein required for the establishment of auxin gradients and for patterning of the apical domain of the embryo. Involved in the specification of the cotyledon primordia. Also required for normal inflorescence and floral meristem function, normal developmental patterning and thermotolerance. Acts as a molecular chaperone. The protein is Protein BOBBER 2 (BOB2) of Arabidopsis thaliana (Mouse-ear cress).